A 265-amino-acid polypeptide reads, in one-letter code: Glutamate racemase (265 aa).

Substrate-binding positions include 10-11 and 42-43; these read DS and YG. Catalysis depends on Cys73, which acts as the Proton donor/acceptor. 74 to 75 serves as a coordination point for substrate; the sequence is NT. The active-site Proton donor/acceptor is Cys183. Residue 184 to 185 participates in substrate binding; the sequence is TH.

Belongs to the aspartate/glutamate racemases family.

It catalyses the reaction L-glutamate = D-glutamate. Its pathway is cell wall biogenesis; peptidoglycan biosynthesis. In terms of biological role, provides the (R)-glutamate required for cell wall biosynthesis. This is Glutamate racemase from Corynebacterium diphtheriae (strain ATCC 700971 / NCTC 13129 / Biotype gravis).